Here is a 297-residue protein sequence, read N- to C-terminus: Lipoyl synthase (297 aa).

Cys40, Cys45, Cys51, Cys67, Cys71, Cys74, and Ser280 together coordinate [4Fe-4S] cluster. One can recognise a Radical SAM core domain in the interval 53 to 269 (AVRKTATFMI…KEIALSKGFS (217 aa)).

It belongs to the radical SAM superfamily. Lipoyl synthase family. It depends on [4Fe-4S] cluster as a cofactor.

It is found in the cytoplasm. The enzyme catalyses [[Fe-S] cluster scaffold protein carrying a second [4Fe-4S](2+) cluster] + N(6)-octanoyl-L-lysyl-[protein] + 2 oxidized [2Fe-2S]-[ferredoxin] + 2 S-adenosyl-L-methionine + 4 H(+) = [[Fe-S] cluster scaffold protein] + N(6)-[(R)-dihydrolipoyl]-L-lysyl-[protein] + 4 Fe(3+) + 2 hydrogen sulfide + 2 5'-deoxyadenosine + 2 L-methionine + 2 reduced [2Fe-2S]-[ferredoxin]. The protein operates within protein modification; protein lipoylation via endogenous pathway; protein N(6)-(lipoyl)lysine from octanoyl-[acyl-carrier-protein]. In terms of biological role, catalyzes the radical-mediated insertion of two sulfur atoms into the C-6 and C-8 positions of the octanoyl moiety bound to the lipoyl domains of lipoate-dependent enzymes, thereby converting the octanoylated domains into lipoylated derivatives. This Bacillus cereus (strain ATCC 14579 / DSM 31 / CCUG 7414 / JCM 2152 / NBRC 15305 / NCIMB 9373 / NCTC 2599 / NRRL B-3711) protein is Lipoyl synthase.